The sequence spans 290 residues: ATP synthase gamma chain (290 aa).

It belongs to the ATPase gamma chain family. In terms of assembly, F-type ATPases have 2 components, CF(1) - the catalytic core - and CF(0) - the membrane proton channel. CF(1) has five subunits: alpha(3), beta(3), gamma(1), delta(1), epsilon(1). CF(0) has three main subunits: a, b and c.

Its subcellular location is the cell inner membrane. In terms of biological role, produces ATP from ADP in the presence of a proton gradient across the membrane. The gamma chain is believed to be important in regulating ATPase activity and the flow of protons through the CF(0) complex. This chain is ATP synthase gamma chain, found in Buchnera aphidicola subsp. Acyrthosiphon pisum (strain APS) (Acyrthosiphon pisum symbiotic bacterium).